A 214-amino-acid polypeptide reads, in one-letter code: Soluble inorganic pyrophosphatase (214 aa).

The substrate site is built by lysine 64, arginine 78, and tyrosine 90. Residues aspartate 100, aspartate 105, and aspartate 137 each contribute to the Mg(2+) site. Tyrosine 174 contacts substrate.

The protein belongs to the PPase family. Requires Mg(2+) as cofactor.

It localises to the cytoplasm. It carries out the reaction diphosphate + H2O = 2 phosphate + H(+). This is Soluble inorganic pyrophosphatase (IPP) from Oryza sativa subsp. indica (Rice).